The following is a 143-amino-acid chain: Transcriptional regulator MraZ (143 aa).

SpoVT-AbrB domains are found at residues 5-47 (THTP…PRAE) and 76-119 (TDEQ…DAQA).

This sequence belongs to the MraZ family. As to quaternary structure, forms oligomers.

The protein resides in the cytoplasm. It localises to the nucleoid. The sequence is that of Transcriptional regulator MraZ from Mycobacterium leprae (strain Br4923).